The sequence spans 721 residues: Rho GTPase-activating protein gacY (721 aa).

Positions 1-325 (MDSSFKRASF…PQQPQQQQST (325 aa)) are disordered. Low complexity predominate over residues 17-33 (NIDNINEMNNNNMNTAP). Residues 34–44 (APAPAPIPTPQ) show a composition bias toward pro residues. The span at 146–168 (DNNNNGNNNNNNNNNDNNNNNNN) shows a compositional bias: low complexity. The segment covering 169–181 (NDDDDEDEDDDEY) has biased composition (acidic residues). Composition is skewed to polar residues over residues 182–202 (SNVS…NTMN) and 219–240 (KNDS…SSRR). The segment covering 308 to 323 (QQQQQPQQPQQPQQQQ) has biased composition (low complexity). Residues 363 to 520 (KSQRFPEIEA…AIMMHRPAGK (158 aa)) form the CRAL-TRIO domain. Residues 528-719 (APLEDVINRP…LILDNINILF (192 aa)) form the Rho-GAP domain.

The protein localises to the cytoplasm. Rho GTPase-activating protein involved in the signal transduction pathway. In Dictyostelium discoideum (Social amoeba), this protein is Rho GTPase-activating protein gacY (gacY).